Consider the following 312-residue polypeptide: Ribosomal protein L11 methyltransferase (312 aa).

The S-adenosyl-L-methionine site is built by Thr-162, Gly-183, Asp-205, and Asn-248.

This sequence belongs to the methyltransferase superfamily. PrmA family.

The protein resides in the cytoplasm. It catalyses the reaction L-lysyl-[protein] + 3 S-adenosyl-L-methionine = N(6),N(6),N(6)-trimethyl-L-lysyl-[protein] + 3 S-adenosyl-L-homocysteine + 3 H(+). Methylates ribosomal protein L11. This is Ribosomal protein L11 methyltransferase from Bacillus cereus (strain Q1).